A 627-amino-acid chain; its full sequence is Chaperone protein HtpG (627 aa).

Residues 1–343 (MATQEFQAET…SEDLSLNISR (343 aa)) are a; substrate-binding. The interval 344-553 (EMLQQDKQLK…EGEISIEMEK (210 aa)) is b. The tract at residues 554-627 (VLQSMPNNQN…YTNNVCKIMS (74 aa)) is c.

This sequence belongs to the heat shock protein 90 family. Homodimer.

It is found in the cytoplasm. In terms of biological role, molecular chaperone. Has ATPase activity. This Natranaerobius thermophilus (strain ATCC BAA-1301 / DSM 18059 / JW/NM-WN-LF) protein is Chaperone protein HtpG.